The sequence spans 249 residues: Ubiquinone/menaquinone biosynthesis C-methyltransferase UbiE (249 aa).

S-adenosyl-L-methionine is bound by residues T72, D93, and 121-122 (DA).

This sequence belongs to the class I-like SAM-binding methyltransferase superfamily. MenG/UbiE family.

It carries out the reaction a 2-demethylmenaquinol + S-adenosyl-L-methionine = a menaquinol + S-adenosyl-L-homocysteine + H(+). The catalysed reaction is a 2-methoxy-6-(all-trans-polyprenyl)benzene-1,4-diol + S-adenosyl-L-methionine = a 5-methoxy-2-methyl-3-(all-trans-polyprenyl)benzene-1,4-diol + S-adenosyl-L-homocysteine + H(+). The protein operates within quinol/quinone metabolism; menaquinone biosynthesis; menaquinol from 1,4-dihydroxy-2-naphthoate: step 2/2. It participates in cofactor biosynthesis; ubiquinone biosynthesis. Methyltransferase required for the conversion of demethylmenaquinol (DMKH2) to menaquinol (MKH2) and the conversion of 2-polyprenyl-6-methoxy-1,4-benzoquinol (DDMQH2) to 2-polyprenyl-3-methyl-6-methoxy-1,4-benzoquinol (DMQH2). This is Ubiquinone/menaquinone biosynthesis C-methyltransferase UbiE from Saccharophagus degradans (strain 2-40 / ATCC 43961 / DSM 17024).